We begin with the raw amino-acid sequence, 335 residues long: Glucokinase (335 aa).

Ala-11–Thr-16 is an ATP binding site.

It belongs to the bacterial glucokinase family.

The protein localises to the cytoplasm. It catalyses the reaction D-glucose + ATP = D-glucose 6-phosphate + ADP + H(+). This chain is Glucokinase, found in Xanthomonas campestris pv. campestris (strain B100).